A 213-amino-acid chain; its full sequence is LexA repressor 2 (213 aa).

The H-T-H motif DNA-binding region spans 27 to 47 (QTEIARAFGFKGVRAAQYHLE). Residues Ser-133 and Lys-170 each act as for autocatalytic cleavage activity in the active site.

The protein belongs to the peptidase S24 family. Homodimer.

The catalysed reaction is Hydrolysis of Ala-|-Gly bond in repressor LexA.. Its function is as follows. Represses a number of genes involved in the response to DNA damage (SOS response), including recA and lexA. In the presence of single-stranded DNA, RecA interacts with LexA causing an autocatalytic cleavage which disrupts the DNA-binding part of LexA, leading to derepression of the SOS regulon and eventually DNA repair. This Xanthomonas campestris pv. campestris (strain ATCC 33913 / DSM 3586 / NCPPB 528 / LMG 568 / P 25) protein is LexA repressor 2.